A 448-amino-acid chain; its full sequence is Methionine aminopeptidase 2 (448 aa).

Residues 1–94 form a disordered region; the sequence is MAAQVTDALK…PRVLLSNLFP (94 aa). The span at 37-50 shows a compositional bias: acidic residues; it reads AEAEDSDDDDEEPV. Basic residues predominate over residues 61–74; the sequence is KKKRKRKKKPKKKA. Position 201 (His201) interacts with substrate. A divalent metal cation is bound by residues Asp221, Asp232, and His301. A substrate-binding site is contributed by His309. A divalent metal cation is bound by residues Glu334 and Glu429.

It belongs to the peptidase M24A family. Methionine aminopeptidase eukaryotic type 2 subfamily. Co(2+) is required as a cofactor. It depends on Zn(2+) as a cofactor. Requires Mn(2+) as cofactor. The cofactor is Fe(2+).

The protein resides in the cytoplasm. It catalyses the reaction Release of N-terminal amino acids, preferentially methionine, from peptides and arylamides.. Cotranslationally removes the N-terminal methionine from nascent proteins. The N-terminal methionine is often cleaved when the second residue in the primary sequence is small and uncharged (Met-Ala-, Cys, Gly, Pro, Ser, Thr, or Val). This Botryotinia fuckeliana (strain B05.10) (Noble rot fungus) protein is Methionine aminopeptidase 2.